The chain runs to 116 residues: MNEIIRAIEAEQIRTDLPKFAIGDTIKVYVKIQEGNKERVQMFEGTVIKKQNGGLRETFTVRRVAYGTGVERTFPMNAPIIDKIEIARKGKVRRAKLYYLRDRVGKSAKVKELLTR.

Belongs to the bacterial ribosomal protein bL19 family.

In terms of biological role, this protein is located at the 30S-50S ribosomal subunit interface and may play a role in the structure and function of the aminoacyl-tRNA binding site. This is Large ribosomal subunit protein bL19 from Clostridium beijerinckii (strain ATCC 51743 / NCIMB 8052) (Clostridium acetobutylicum).